Here is a 644-residue protein sequence, read N- to C-terminus: Macrolide export ATP-binding/permease protein MacB (644 aa).

In terms of domain architecture, ABC transporter spans 4–242; sequence IECKNINRYF…SNVGRIQEKA (239 aa). 40–47 contacts ATP; it reads GQSGSGKS. 4 helical membrane passes run 270-290, 524-544, 574-594, and 607-627; these read LLTM…VALG, IALI…LVSV, LICI…SLVF, and AASV…FGFM.

Belongs to the ABC transporter superfamily. Macrolide exporter (TC 3.A.1.122) family. In terms of assembly, homodimer.

The protein resides in the cell inner membrane. Functionally, non-canonical ABC transporter that contains transmembrane domains (TMD), which form a pore in the inner membrane, and an ATP-binding domain (NBD), which is responsible for energy generation. Overexpression confers resistance against macrolides. This is Macrolide export ATP-binding/permease protein MacB from Neisseria gonorrhoeae.